The primary structure comprises 414 residues: Dual-specificity RNA methyltransferase RlmN (414 aa).

Residues 1 to 20 show a composition bias toward low complexity; it reads MMSTPETATEATAPEAAPAP. Residues 1–24 form a disordered region; that stretch reads MMSTPETATEATAPEAAPAPSLGA. The active-site Proton acceptor is the Glu129. The 251-residue stretch at 135-385 folds into the Radical SAM core domain; sequence ESDRGTLCVS…VRTPRGRDIL (251 aa). A disulfide bridge links Cys142 with Cys388. Cys149, Cys153, and Cys156 together coordinate [4Fe-4S] cluster. S-adenosyl-L-methionine is bound by residues 214 to 215, Ser246, 268 to 270, and Asn345; these read GE and SLH. The S-methylcysteine intermediate role is filled by Cys388.

The protein belongs to the radical SAM superfamily. RlmN family. [4Fe-4S] cluster is required as a cofactor.

The protein localises to the cytoplasm. It catalyses the reaction adenosine(2503) in 23S rRNA + 2 reduced [2Fe-2S]-[ferredoxin] + 2 S-adenosyl-L-methionine = 2-methyladenosine(2503) in 23S rRNA + 5'-deoxyadenosine + L-methionine + 2 oxidized [2Fe-2S]-[ferredoxin] + S-adenosyl-L-homocysteine. It carries out the reaction adenosine(37) in tRNA + 2 reduced [2Fe-2S]-[ferredoxin] + 2 S-adenosyl-L-methionine = 2-methyladenosine(37) in tRNA + 5'-deoxyadenosine + L-methionine + 2 oxidized [2Fe-2S]-[ferredoxin] + S-adenosyl-L-homocysteine. Functionally, specifically methylates position 2 of adenine 2503 in 23S rRNA and position 2 of adenine 37 in tRNAs. m2A2503 modification seems to play a crucial role in the proofreading step occurring at the peptidyl transferase center and thus would serve to optimize ribosomal fidelity. The polypeptide is Dual-specificity RNA methyltransferase RlmN (Xanthobacter autotrophicus (strain ATCC BAA-1158 / Py2)).